A 301-amino-acid chain; its full sequence is MPIIIDKDLPARKVLQEENIFTMTKERAEKQDIRALKIAILNLMPKKQETEAQLLRLLGNTPLQLDMHLLHMESHISRNVAQDHLTSFYKTFRDIEKERFDGLIITGAPIETLPFEDVDYWEELKKIMDYSKTNVTSTLHICWGAQAGLYYHYGIPKYPLAEKMFGVFEHEVLEQHVKLLQGFDELFFAPHSRHTEVHAADIEKVEDLKLLAISEEAGVYLVIGQNGKHIFVLGHSEYSCDTLKREYERDIQRGLNIAVPKNYFKYNNPDEKPLVRWRSHGNLLFSNWLNYYVYQETPYIL.

Cys142 functions as the Acyl-thioester intermediate in the catalytic mechanism. 2 residues coordinate substrate: Lys163 and Ser192. Catalysis depends on His235, which acts as the Proton acceptor. Glu237 is a catalytic residue. Arg249 is a substrate binding site.

It belongs to the MetA family.

It is found in the cytoplasm. The enzyme catalyses L-homoserine + acetyl-CoA = O-acetyl-L-homoserine + CoA. Its pathway is amino-acid biosynthesis; L-methionine biosynthesis via de novo pathway; O-acetyl-L-homoserine from L-homoserine: step 1/1. Its function is as follows. Transfers an acetyl group from acetyl-CoA to L-homoserine, forming acetyl-L-homoserine. The protein is Homoserine O-acetyltransferase of Bacillus cytotoxicus (strain DSM 22905 / CIP 110041 / 391-98 / NVH 391-98).